The chain runs to 357 residues: MKFGNFLLTYQPPQLDQKEVIKRLVNLGQASESCGFDTAWLLEHHFTEFGLLGNPYVAAANLLGATKKLHVGTAAVVLPTAHPVRQLEDVNLLDQMSKGRFKFGICRGLYDKDFRVFGTDMSNSRELMNSWYDIMTKGMIEGHVSSDNEHIKFPKVKVSPNSYTQRGAPVYVVAESASTTEWAAERGLPIILSWIINNNEKKSQLDLYNEIALEHGHDVSNIDHCMSYITSVDHNSNKAKDICRDFLAHWYDSYLNATSIFDDSNQTKGYDFNKGQWRNFVLKGHKDTNRRIDYSYEINPVGTPQECIEIIQSDIDATGIHNICCGFEANGSETEIIASMKLFQSDVMPYLKEKSNC.

Belongs to the bacterial luciferase oxidoreductase family. In terms of assembly, heterodimer of an alpha and a beta chain.

It catalyses the reaction a long-chain fatty aldehyde + FMNH2 + O2 = a long-chain fatty acid + hnu + FMN + H2O + 2 H(+). Light-emitting reaction in luminous bacteria. This chain is Alkanal monooxygenase alpha chain (luxA), found in Kryptophanaron alfredi symbiont.